Consider the following 384-residue polypeptide: Dual-specificity RNA methyltransferase RlmN (384 aa).

The Proton acceptor role is filled by glutamate 105. The Radical SAM core domain occupies 111–350 (EDDRATLCVS…TIVRKTRGDD (240 aa)). A disulfide bond links cysteine 118 and cysteine 355. [4Fe-4S] cluster is bound by residues cysteine 125, cysteine 129, and cysteine 132. S-adenosyl-L-methionine is bound by residues 179 to 180 (GE), serine 211, 233 to 235 (SLH), and asparagine 312. Cysteine 355 acts as the S-methylcysteine intermediate in catalysis.

The protein belongs to the radical SAM superfamily. RlmN family. [4Fe-4S] cluster serves as cofactor.

The protein resides in the cytoplasm. It carries out the reaction adenosine(2503) in 23S rRNA + 2 reduced [2Fe-2S]-[ferredoxin] + 2 S-adenosyl-L-methionine = 2-methyladenosine(2503) in 23S rRNA + 5'-deoxyadenosine + L-methionine + 2 oxidized [2Fe-2S]-[ferredoxin] + S-adenosyl-L-homocysteine. The enzyme catalyses adenosine(37) in tRNA + 2 reduced [2Fe-2S]-[ferredoxin] + 2 S-adenosyl-L-methionine = 2-methyladenosine(37) in tRNA + 5'-deoxyadenosine + L-methionine + 2 oxidized [2Fe-2S]-[ferredoxin] + S-adenosyl-L-homocysteine. Functionally, specifically methylates position 2 of adenine 2503 in 23S rRNA and position 2 of adenine 37 in tRNAs. m2A2503 modification seems to play a crucial role in the proofreading step occurring at the peptidyl transferase center and thus would serve to optimize ribosomal fidelity. This Escherichia coli O17:K52:H18 (strain UMN026 / ExPEC) protein is Dual-specificity RNA methyltransferase RlmN.